We begin with the raw amino-acid sequence, 350 residues long: Histidinol-phosphate aminotransferase 1 (350 aa).

K210 is modified (N6-(pyridoxal phosphate)lysine).

This sequence belongs to the class-II pyridoxal-phosphate-dependent aminotransferase family. Histidinol-phosphate aminotransferase subfamily. In terms of assembly, homodimer. The cofactor is pyridoxal 5'-phosphate.

The enzyme catalyses L-histidinol phosphate + 2-oxoglutarate = 3-(imidazol-4-yl)-2-oxopropyl phosphate + L-glutamate. It participates in amino-acid biosynthesis; L-histidine biosynthesis; L-histidine from 5-phospho-alpha-D-ribose 1-diphosphate: step 7/9. This is Histidinol-phosphate aminotransferase 1 from Pseudomonas fluorescens (strain ATCC BAA-477 / NRRL B-23932 / Pf-5).